The chain runs to 609 residues: MSDVFNANQFLKTVTSSPGVYRMYDAKAVVIYVGKAKDLKKRLSSYFRKNLTNVKTQALVSHIANIDVTVTHSETDALILENDYIKQYMPKYNVLLRDDKSYPYILLSNHKHPRLAYHRGPKRDKGLYFGPYPNGGAVRESLHLLQKIFPIRQCDDLYYKSRSRPCLQYQIGRCSAPCVGKVSLEDYQEQVRLATLFLKGKDHQVMSVLVGKMEQAASDMRYEQAALYRDQITALRRVSEQQEVSNASGDMDVIGAYYASGVACFHLLFIREGKIFGSRSYYPKVPVNTEVSEVLRSFMLQFYLNSDSQRLTPKEILISEPFEEQDELAKAIQAAQNKKVEIKTQVRGERASFLRLALTNATNAVNTRLSHKNTIEQRFLLLEEAIESTNKIQRMECFDISHTMGESTVASCVVFNREGPSKADYRRYNITGITPGDDYAAMKQAITRRFDKISSSGKIPDILFIDGGIGQLRIAQKVVDEKFVALDNAPTLIGVAKGEGRKPGLETLIYGENEESFTLPADSGALHLIQHIRDESHRFAITGHRNKRQKTRNTSTLESIAGVGPKRRKALLQYLGGLQEVKGASVSELVKVPGISLEMAQTIHDALRG.

Positions 16–94 (SSPGVYRMYD…IKQYMPKYNV (79 aa)) constitute a GIY-YIG domain. The 36-residue stretch at 203 to 238 (HQVMSVLVGKMEQAASDMRYEQAALYRDQITALRRV) folds into the UVR domain.

This sequence belongs to the UvrC family. Interacts with UvrB in an incision complex.

It is found in the cytoplasm. In terms of biological role, the UvrABC repair system catalyzes the recognition and processing of DNA lesions. UvrC both incises the 5' and 3' sides of the lesion. The N-terminal half is responsible for the 3' incision and the C-terminal half is responsible for the 5' incision. The polypeptide is UvrABC system protein C (Shewanella halifaxensis (strain HAW-EB4)).